Consider the following 128-residue polypeptide: Cytochrome c-type biogenesis protein CcmE (128 aa).

Residues 1-8 (MQKRVRNR) are Cytoplasmic-facing. Residues 9 to 29 (LITIIICFCSACLGISIILYN) traverse the membrane as a helical; Signal-anchor for type II membrane protein segment. Residues 30-128 (LEKNIVFFLP…KHDENYRPPQ (99 aa)) are Periplasmic-facing. 2 residues coordinate heme: His120 and Tyr124.

The protein belongs to the CcmE/CycJ family.

It is found in the cell inner membrane. Its function is as follows. Heme chaperone required for the biogenesis of c-type cytochromes. Transiently binds heme delivered by CcmC and transfers the heme to apo-cytochromes in a process facilitated by CcmF and CcmH. The sequence is that of Cytochrome c-type biogenesis protein CcmE from Rickettsia conorii (strain ATCC VR-613 / Malish 7).